Consider the following 379-residue polypeptide: Copper-containing nitrite reductase (379 aa).

The tat-type signal signal peptide spans 1–32 (MSEQFRLTRRSMLAGAAVAGALAPVVTSVAHA). 2 consecutive Plastocyanin-like domains span residues 33–214 (EGGG…YDKV) and 215–379 (YYVG…PTSG). The Cu cation site is built by His-134, His-139, His-174, Cys-175, His-184, Met-189, and His-345.

Belongs to the multicopper oxidase family. As to quaternary structure, homotrimer. Cu(2+) serves as cofactor. Cu(+) is required as a cofactor. It depends on FAD as a cofactor. In terms of processing, predicted to be exported by the Tat system. The position of the signal peptide cleavage has not been experimentally proven.

The protein localises to the periplasm. It carries out the reaction nitric oxide + Fe(III)-[cytochrome c] + H2O = Fe(II)-[cytochrome c] + nitrite + 2 H(+). It functions in the pathway nitrogen metabolism; nitrate reduction (denitrification); dinitrogen from nitrate: step 2/4. The sequence is that of Copper-containing nitrite reductase (nirU) from Neorhizobium galegae (Rhizobium galegae).